Reading from the N-terminus, the 358-residue chain is UDP-N-acetylglucosamine--N-acetylmuramyl-(pentapeptide) pyrophosphoryl-undecaprenol N-acetylglucosamine transferase (358 aa).

UDP-N-acetyl-alpha-D-glucosamine-binding positions include 11-13 (TGG), N120, R161, S188, and Q282.

The protein belongs to the glycosyltransferase 28 family. MurG subfamily.

The protein localises to the cell inner membrane. It carries out the reaction di-trans,octa-cis-undecaprenyl diphospho-N-acetyl-alpha-D-muramoyl-L-alanyl-D-glutamyl-meso-2,6-diaminopimeloyl-D-alanyl-D-alanine + UDP-N-acetyl-alpha-D-glucosamine = di-trans,octa-cis-undecaprenyl diphospho-[N-acetyl-alpha-D-glucosaminyl-(1-&gt;4)]-N-acetyl-alpha-D-muramoyl-L-alanyl-D-glutamyl-meso-2,6-diaminopimeloyl-D-alanyl-D-alanine + UDP + H(+). Its pathway is cell wall biogenesis; peptidoglycan biosynthesis. Its function is as follows. Cell wall formation. Catalyzes the transfer of a GlcNAc subunit on undecaprenyl-pyrophosphoryl-MurNAc-pentapeptide (lipid intermediate I) to form undecaprenyl-pyrophosphoryl-MurNAc-(pentapeptide)GlcNAc (lipid intermediate II). This Parasynechococcus marenigrum (strain WH8102) protein is UDP-N-acetylglucosamine--N-acetylmuramyl-(pentapeptide) pyrophosphoryl-undecaprenol N-acetylglucosamine transferase.